The sequence spans 379 residues: Chaperone protein DnaJ (379 aa).

One can recognise a J domain in the interval 7–72 (CYYETLEVDR…DKRAAYDRYG (66 aa)). The segment at 135-213 (GKTAQIEIPV…CSGAGRIERE (79 aa)) adopts a CR-type zinc-finger fold. The Zn(2+) site is built by Cys-148, Cys-151, Cys-165, Cys-168, Cys-187, Cys-190, Cys-201, and Cys-204. 4 CXXCXGXG motif repeats span residues 148–155 (CESCSGTG), 165–172 (CSMCGGAG), 187–194 (CPGCQGRG), and 201–208 (CPACSGAG).

The protein belongs to the DnaJ family. In terms of assembly, homodimer. The cofactor is Zn(2+).

The protein resides in the cytoplasm. In terms of biological role, participates actively in the response to hyperosmotic and heat shock by preventing the aggregation of stress-denatured proteins and by disaggregating proteins, also in an autonomous, DnaK-independent fashion. Unfolded proteins bind initially to DnaJ; upon interaction with the DnaJ-bound protein, DnaK hydrolyzes its bound ATP, resulting in the formation of a stable complex. GrpE releases ADP from DnaK; ATP binding to DnaK triggers the release of the substrate protein, thus completing the reaction cycle. Several rounds of ATP-dependent interactions between DnaJ, DnaK and GrpE are required for fully efficient folding. Also involved, together with DnaK and GrpE, in the DNA replication of plasmids through activation of initiation proteins. The polypeptide is Chaperone protein DnaJ (Rhodopseudomonas palustris (strain BisB18)).